A 967-amino-acid polypeptide reads, in one-letter code: Transmembrane channel-like protein 5 (967 aa).

Polar residues-rich tracts occupy residues 1–10 (MSSFHQNSSY), 21–31 (GSRNHTHNYLE), 53–62 (NPHSSGSRTN), and 168–184 (QDNS…SNLP). The disordered stretch occupies residues 1 to 240 (MSSFHQNSSY…EEGDGYSSSK (240 aa)). Residues 1-420 (MSSFHQNSSY…YFSFLRWLLK (420 aa)) are Extracellular-facing. Residues 421–441 (FNIFSFVMNFSFIIIPQFTVG) traverse the membrane as a helical segment. At 442 to 449 (AKNTLQFT) the chain is on the cytoplasmic side. The helical transmembrane segment at 450–470 (GLEFFTGAGYFGDTVMYYGFY) threads the bilayer. Topologically, residues 471–487 (TNSTIRHRMGGASYNMQ) are extracellular. Residues 488 to 508 (LAYIFTIGACLVVCFFSLLFS) form a helical membrane-spanning segment. Residues 509–581 (MAKYFRNNFI…NQQLTRFSAH (73 aa)) lie on the Cytoplasmic side of the membrane. The helical transmembrane segment at 582 to 602 (VAAWLVSTGVTAACCVAVYYL) threads the bilayer. The Extracellular segment spans residues 603–616 (AEYNSEFLKTHRNP). Residues 617 to 637 (GAVLLLPFVVSCINLAVPRFY) form a helical membrane-spanning segment. At 638–660 (SMFRLVERYEIPRQEVYVLLVRN) the chain is on the cytoplasmic side. Residues 661–681 (IFLKISIVGILCYYWLNIVAL) form a helical membrane-spanning segment. Over 682-694 (SGEECWETLIGQD) the chain is Extracellular. A helical membrane pass occupies residues 695–715 (IYRLLLMDFVFSLADSLLGEF). At 716–749 (LRRLIGMKFTSLSLQEFDIARNVLELIYAQTLTW) the chain is on the cytoplasmic side. The chain crosses the membrane as a helical span at residues 750 to 770 (LGIFFCPLLPFIQMITLFIMF). Residues 771-796 (YVKNVSLMMNFQPPSKAWRASQMITF) lie on the Extracellular side of the membrane. The chain crosses the membrane as a helical span at residues 797–817 (FIFLLFFPSFTGVLCTLAITI). Topologically, residues 818–861 (WRLKPSADCGPFRGLPSFIQSIYSWIDTLSRRPGYLWVVWIYQN) are cytoplasmic. Residues 862 to 882 (LIGSVHFFFILTLIVLIITYL) traverse the membrane as a helical segment. The Extracellular portion of the chain corresponds to 883–967 (YWQITEGRKV…RSAQEENPIA (85 aa)).

This sequence belongs to the TMC family. As to expression, ubiquitously expressed.

The protein resides in the membrane. Functionally, probable component of an ion channel. Molecular function hasn't been characterized yet. The polypeptide is Transmembrane channel-like protein 5 (Mus musculus (Mouse)).